We begin with the raw amino-acid sequence, 310 residues long: MTVTVKKLIERLKLEIIYANDQLLEKEITTSDISRPGLEMTGYFDYYSPERIQLFGMKEWSYMTKMTAHNRYSVLREMFKKDTPAVIVSRDLPIPEEMVKAAEEEGIALLRSKISTSRLSGSISYYLDALLAERTSVHGVLMDIYGMGVLIQGDSGIGKSETGLELVKRGHRLVADDRVDVYAKDEETLWGEPAEILRHLLEIRGVGIIDVMSLYGASAVKDSSQVQLAIYLENFEAGKVFDRLGNGHEEVEFAGVKVPRIRIPVKTGRNVSVVIEAAAMNHRAKQMGFDATKTFEERLTNLISRNEEMK.

Residues His-138 and Lys-159 contribute to the active site. Residue Gly-153–Ser-160 participates in ATP binding. Ser-160 serves as a coordination point for Mg(2+). Asp-177 (proton acceptor; for phosphorylation activity. Proton donor; for dephosphorylation activity) is an active-site residue. Residues Leu-201–Asp-210 are important for the catalytic mechanism of both phosphorylation and dephosphorylation. Mg(2+) is bound at residue Glu-202. Arg-243 is an active-site residue. Residues Pro-264 to Arg-269 are important for the catalytic mechanism of dephosphorylation.

This sequence belongs to the HPrK/P family. As to quaternary structure, homohexamer. Mg(2+) serves as cofactor.

It catalyses the reaction [HPr protein]-L-serine + ATP = [HPr protein]-O-phospho-L-serine + ADP + H(+). The catalysed reaction is [HPr protein]-O-phospho-L-serine + phosphate + H(+) = [HPr protein]-L-serine + diphosphate. Catalyzes the ATP- as well as the pyrophosphate-dependent phosphorylation of a specific serine residue in HPr, a phosphocarrier protein of the phosphoenolpyruvate-dependent sugar phosphotransferase system (PTS). HprK/P also catalyzes the pyrophosphate-producing, inorganic phosphate-dependent dephosphorylation (phosphorolysis) of seryl-phosphorylated HPr (P-Ser-HPr). The two antagonistic activities of HprK/P are regulated by several intracellular metabolites, which change their concentration in response to the absence or presence of rapidly metabolisable carbon sources (glucose, fructose, etc.) in the growth medium. Therefore, by controlling the phosphorylation state of HPr, HPrK/P is a sensor enzyme that plays a major role in the regulation of carbon metabolism and sugar transport: it mediates carbon catabolite repression (CCR), and regulates PTS-catalyzed carbohydrate uptake and inducer exclusion. This chain is HPr kinase/phosphorylase, found in Streptococcus uberis (strain ATCC BAA-854 / 0140J).